We begin with the raw amino-acid sequence, 1014 residues long: Calcium-transporting ATPase 2, plasma membrane-type (1014 aa).

M1 carries the N-acetylmethionine modification. The Cytoplasmic segment spans residues 1–160; it reads MESYLNENFD…NKFAESEMRG (160 aa). The segment at 20 to 31 is interaction with calmodulin; it reads VLEKWRNLCGVV. At S45 the chain carries Phosphoserine; by CPK1. The chain crosses the membrane as a helical span at residues 161–181; that stretch reads FWVFVWEALQDMTLMILGVCA. Residues 182–199 are Lumenal-facing; the sequence is FVSLIVGIATEGWPKGSH. The chain crosses the membrane as a helical span at residues 200–220; the sequence is DGLGIAASILLVVFVTATSDY. Over 221–348 the chain is Cytoplasmic; sequence RQSLQFRDLD…DDETPLQVKL (128 aa). A helical transmembrane segment spans residues 349-368; the sequence is NGVATIIGKIGLFFAVVTFA. Over 369–398 the chain is Lumenal; sequence VLVQGMFMRKLSTGTHWVWSGDEALELLEY. The chain crosses the membrane as a helical span at residues 399–416; that stretch reads FAIAVTIVVVAVPEGLPL. At 417–810 the chain is on the cytoplasmic side; the sequence is AVTLSLAFAM…KWGRSVYINI (394 aa). D454 functions as the 4-aspartylphosphate intermediate in the catalytic mechanism. Mg(2+)-binding residues include D755 and D759. A helical transmembrane segment spans residues 811-829; that stretch reads QKFVQFQLTVNVVALVVNF. The Lumenal portion of the chain corresponds to 830–840; that stretch reads SSACLTGSAPL. The helical transmembrane segment at 841–861 threads the bilayer; that stretch reads TAVQLLWVNMIMDTLGALALA. At 862 to 881 the chain is on the cytoplasmic side; that stretch reads TEPPNDELMKRLPVGRRGNF. Residues 882-904 traverse the membrane as a helical segment; that stretch reads ITNAMWRNILGQAVYQFIVIWIL. The Lumenal portion of the chain corresponds to 905 to 916; it reads QAKGKAMFGLDG. A helical transmembrane segment spans residues 917–938; that stretch reads PDSTLMLNTLIFNCFVFCQVFN. At 939–956 the chain is on the cytoplasmic side; it reads EISSREMEEIDVFKGILD. The chain crosses the membrane as a helical span at residues 957-978; the sequence is NYVFVVVIGATVFFQIIIIEFL. Over 979 to 988 the chain is Lumenal; the sequence is GTFASTTPLT. A helical transmembrane segment spans residues 989-1010; the sequence is ITQWIFSIFIGFLGMPIAAGLK. Over 1011–1014 the chain is Cytoplasmic; that stretch reads TIPV.

Belongs to the cation transport ATPase (P-type) (TC 3.A.3) family. Type IIB subfamily.

It is found in the endoplasmic reticulum membrane. It catalyses the reaction Ca(2+)(in) + ATP + H2O = Ca(2+)(out) + ADP + phosphate + H(+). Activated by calmodulin. Functionally, this magnesium-dependent enzyme catalyzes the hydrolysis of ATP coupled with the translocation of calcium from the cytosol into the endoplasmic reticulum. The protein is Calcium-transporting ATPase 2, plasma membrane-type (ACA2) of Arabidopsis thaliana (Mouse-ear cress).